The chain runs to 349 residues: Zinc-type alcohol dehydrogenase-like protein PB24D3.08c (349 aa).

The protein belongs to the zinc-containing alcohol dehydrogenase family. Quinone oxidoreductase subfamily.

The protein resides in the cytoplasm. It is found in the nucleus. The polypeptide is Zinc-type alcohol dehydrogenase-like protein PB24D3.08c (Schizosaccharomyces pombe (strain 972 / ATCC 24843) (Fission yeast)).